The sequence spans 315 residues: 4-diphosphocytidyl-2-C-methyl-D-erythritol kinase (315 aa).

Lys26 is a catalytic residue. Position 111-121 (111-121) interacts with ATP; it reads PLAGGLAGGSA. Residue Asp153 is part of the active site.

It belongs to the GHMP kinase family. IspE subfamily.

The catalysed reaction is 4-CDP-2-C-methyl-D-erythritol + ATP = 4-CDP-2-C-methyl-D-erythritol 2-phosphate + ADP + H(+). It functions in the pathway isoprenoid biosynthesis; isopentenyl diphosphate biosynthesis via DXP pathway; isopentenyl diphosphate from 1-deoxy-D-xylulose 5-phosphate: step 3/6. In terms of biological role, catalyzes the phosphorylation of the position 2 hydroxy group of 4-diphosphocytidyl-2C-methyl-D-erythritol. The protein is 4-diphosphocytidyl-2-C-methyl-D-erythritol kinase of Salinispora tropica (strain ATCC BAA-916 / DSM 44818 / JCM 13857 / NBRC 105044 / CNB-440).